The sequence spans 436 residues: Magnesium transporter MRS2-4 (436 aa).

The disordered stretch occupies residues 1–56 (MGKGPLSFRRLSSIRHRKKGSAVKDDSAQTSTPSSPPPPLPIHAGGSAVGATGKAK). The segment covering 12–21 (SSIRHRKKGS) has biased composition (basic residues). Over residues 44–53 (AGGSAVGATG) the composition is skewed to low complexity. The next 2 helical transmembrane spans lie at 372 to 392 (LTLT…SLFG) and 405 to 425 (VFGY…MVTL). Positions 392-394 (GMN) match the Required for magnesium transport activity motif.

Belongs to the CorA metal ion transporter (MIT) (TC 1.A.35.5) family. Expressed in the whole plant except roots.

The protein resides in the membrane. Functionally, magnesium transporter that may mediate the influx of magnesium. The chain is Magnesium transporter MRS2-4 (MRS2-4) from Arabidopsis thaliana (Mouse-ear cress).